A 316-amino-acid chain; its full sequence is Pantothenate kinase (316 aa).

95–102 (GSVSVGKS) serves as a coordination point for ATP.

Belongs to the prokaryotic pantothenate kinase family.

It is found in the cytoplasm. The catalysed reaction is (R)-pantothenate + ATP = (R)-4'-phosphopantothenate + ADP + H(+). The protein operates within cofactor biosynthesis; coenzyme A biosynthesis; CoA from (R)-pantothenate: step 1/5. The chain is Pantothenate kinase from Actinobacillus pleuropneumoniae serotype 7 (strain AP76).